The chain runs to 144 residues: Ribosomal RNA large subunit methyltransferase H (144 aa).

S-adenosyl-L-methionine is bound by residues Leu-63, Gly-92, and 111-116 (LSPMTF).

Belongs to the RNA methyltransferase RlmH family. In terms of assembly, homodimer.

The protein localises to the cytoplasm. The catalysed reaction is pseudouridine(1915) in 23S rRNA + S-adenosyl-L-methionine = N(3)-methylpseudouridine(1915) in 23S rRNA + S-adenosyl-L-homocysteine + H(+). Functionally, specifically methylates the pseudouridine at position 1915 (m3Psi1915) in 23S rRNA. In Synechococcus sp. (strain CC9605), this protein is Ribosomal RNA large subunit methyltransferase H.